The sequence spans 174 residues: Sarcoplasmic calcium-binding protein (174 aa).

Residue serine 1 is modified to N-acetylserine. EF-hand domains are found at residues 3 to 38, 55 to 90, 91 to 126, and 127 to 160; these read LWVQ…FAKE, GVWD…EAKS, VVEG…LGLD, and KTMA…FFMN. Ca(2+) is bound by residues aspartate 16, aspartate 18, aspartate 20, and aspartate 27. Ca(2+)-binding residues include aspartate 104, asparagine 106, aspartate 108, asparagine 110, glutamate 115, aspartate 138, asparagine 140, aspartate 142, and glutamate 149.

Its function is as follows. Like parvalbumins, SCPs seem to be more abundant in fast contracting muscles, but no functional relationship can be established from this distribution. The sequence is that of Sarcoplasmic calcium-binding protein from Hediste diversicolor (Sandworm).